The chain runs to 595 residues: Wee1-like protein kinase 1-B (595 aa).

Over residues 1–17 (MNVQPRNMNVQPRNMNV) the composition is skewed to polar residues. The tract at residues 1-127 (MNVQPRNMNV…CPGTPPHKTF (127 aa)) is disordered. Pro residues predominate over residues 111–122 (PTSPIPECPGTP). Thr-186 is subject to Phosphothreonine; by cdk1. In terms of domain architecture, Protein kinase spans 248–518 (FHELEKIGSG…SVALVKHSVL (271 aa)). Residues 254 to 262 (IGSGEFGSV) and Lys-277 contribute to the ATP site. Residue Asp-375 is the Proton acceptor of the active site. Asn-380 and Asp-412 together coordinate Mg(2+). Residues 526–563 (AEQLRIELDAEKFKNALLQKELKKAQIAKAAAEERAHF) are a coiled coil.

The protein belongs to the protein kinase superfamily. Ser/Thr protein kinase family. WEE1 subfamily. As to quaternary structure, interacts (when phosphorylated at Thr-186) with pin1. In terms of processing, phosphorylation at Thr-186 during M-phase by cdk1 inhibits the kinase activity and leads to interaction with pin1. Zygotically expressed. Present in oocytes and postgastrula embryos (at least until the tailbud stage). Expression begins at the midblastula stage and increases after the early gastrula stage.

It is found in the nucleus. The catalysed reaction is L-tyrosyl-[protein] + ATP = O-phospho-L-tyrosyl-[protein] + ADP + H(+). Acts as a zygotic negative regulator of entry into mitosis (G2 to M transition) by protecting the nucleus from cytoplasmically activated cyclin B1-complexed cdk1 before the onset of mitosis by mediating phosphorylation of cdk1 on 'Tyr-15'. Specifically phosphorylates and inactivates cyclin B1-complexed cdk1 reaching a maximum during G2 phase and a minimum as cells enter M phase. Phosphorylation of cyclin B1-cdk1 occurs exclusively on 'Tyr-15' and phosphorylation of monomeric cdk1 does not occur. This is Wee1-like protein kinase 1-B (wee1-b) from Xenopus laevis (African clawed frog).